The chain runs to 400 residues: E3 ubiquitin-protein ligase RNF149 (400 aa).

Residues 1 to 32 form the signal peptide; that stretch reads MAWRRREASVGARGVLALALLALALCVPGARG. N-linked (GlcNAc...) asparagine glycans are attached at residues Asn52 and Asn145. The PA domain occupies 67-175; sequence SSPKEGAHGL…PKGREILELV (109 aa). A helical transmembrane segment spans residues 201 to 221; sequence VVFVAIAFITMMIISLAWLIF. The RING-type; atypical zinc finger occupies 269 to 310; that stretch reads CAVCIENFKVKDIIRILPCKHIFHRICIDPWLLDHRTCPMCK. The segment at 325–400 is disordered; the sequence is DVQEMPAPES…SDSRHGGPIS (76 aa). Ser345 carries the phosphoserine modification. Over residues 356–368 the composition is skewed to low complexity; sequence DSSPPSASPAESE. Over residues 389–400 the composition is skewed to basic and acidic residues; sequence GRSDSRHGGPIS.

Its subcellular location is the membrane. The enzyme catalyses S-ubiquitinyl-[E2 ubiquitin-conjugating enzyme]-L-cysteine + [acceptor protein]-L-lysine = [E2 ubiquitin-conjugating enzyme]-L-cysteine + N(6)-ubiquitinyl-[acceptor protein]-L-lysine.. It functions in the pathway protein modification; protein ubiquitination. In terms of biological role, E3 ubiquitin-protein ligase. Ubiquitinates BRAF, inducing its proteasomal degradation. The chain is E3 ubiquitin-protein ligase RNF149 (RNF149) from Homo sapiens (Human).